The primary structure comprises 57 residues: Large ribosomal subunit protein bL32 (57 aa).

The interval 1–23 (MAVPKKRTSKTRTNRRRAQKKAR) is disordered.

This sequence belongs to the bacterial ribosomal protein bL32 family.

In Natranaerobius thermophilus (strain ATCC BAA-1301 / DSM 18059 / JW/NM-WN-LF), this protein is Large ribosomal subunit protein bL32.